Here is a 686-residue protein sequence, read N- to C-terminus: DNA ligase 2 (686 aa).

NAD(+) contacts are provided by residues 37 to 41, 86 to 87, and E121; these read DDEYD and SL. K123 serves as the catalytic N6-AMP-lysine intermediate. NAD(+) is bound by residues R144, E179, K295, and K319. Zn(2+)-binding residues include C413, C416, C431, and C436. The BRCT domain maps to 593–681; that stretch reads VRGEQLAGLN…GVQLPGVQAS (89 aa).

The protein belongs to the NAD-dependent DNA ligase family. LigA subfamily. Mg(2+) is required as a cofactor. Mn(2+) serves as cofactor.

The enzyme catalyses NAD(+) + (deoxyribonucleotide)n-3'-hydroxyl + 5'-phospho-(deoxyribonucleotide)m = (deoxyribonucleotide)n+m + AMP + beta-nicotinamide D-nucleotide.. Its function is as follows. DNA ligase that catalyzes the formation of phosphodiester linkages between 5'-phosphoryl and 3'-hydroxyl groups in double-stranded DNA using NAD as a coenzyme and as the energy source for the reaction. It is essential for DNA replication and repair of damaged DNA. The chain is DNA ligase 2 from Deinococcus deserti (strain DSM 17065 / CIP 109153 / LMG 22923 / VCD115).